The following is a 205-amino-acid chain: Small ribosomal subunit protein uS3c (205 aa).

In terms of domain architecture, KH type-2 spans 37 to 106 (IRQLLRDYVL…TWRISLVEVS (70 aa)).

Belongs to the universal ribosomal protein uS3 family. Part of the 30S ribosomal subunit.

It is found in the plastid. It localises to the chloroplast. The chain is Small ribosomal subunit protein uS3c (rps3) from Cyanidioschyzon merolae (strain NIES-3377 / 10D) (Unicellular red alga).